A 284-amino-acid polypeptide reads, in one-letter code: Probable plastid-lipid-associated protein 10, chloroplastic (284 aa).

Residues 1–40 (MDRIASATFSCPAISLSRVCRISPFGLNIKTNHRKRFSCR) constitute a chloroplast transit peptide.

It belongs to the PAP/fibrillin family.

Its subcellular location is the plastid. The protein localises to the chloroplast. It is found in the plastoglobule. In Arabidopsis thaliana (Mouse-ear cress), this protein is Probable plastid-lipid-associated protein 10, chloroplastic (PAP10).